A 125-amino-acid polypeptide reads, in one-letter code: Small ribosomal subunit protein uS12 (125 aa).

A 3-methylthioaspartic acid modification is found at D89.

Belongs to the universal ribosomal protein uS12 family. Part of the 30S ribosomal subunit. Contacts proteins S8 and S17. May interact with IF1 in the 30S initiation complex.

Functionally, with S4 and S5 plays an important role in translational accuracy. In terms of biological role, interacts with and stabilizes bases of the 16S rRNA that are involved in tRNA selection in the A site and with the mRNA backbone. Located at the interface of the 30S and 50S subunits, it traverses the body of the 30S subunit contacting proteins on the other side and probably holding the rRNA structure together. The combined cluster of proteins S8, S12 and S17 appears to hold together the shoulder and platform of the 30S subunit. The polypeptide is Small ribosomal subunit protein uS12 (Cupriavidus necator (strain ATCC 17699 / DSM 428 / KCTC 22496 / NCIMB 10442 / H16 / Stanier 337) (Ralstonia eutropha)).